Here is a 329-residue protein sequence, read N- to C-terminus: Glycerol-3-phosphate dehydrogenase [NAD(P)+] (329 aa).

Residues tryptophan 15, histidine 35, and lysine 107 each contribute to the NADPH site. Sn-glycerol 3-phosphate contacts are provided by lysine 107, glycine 135, and serine 137. Alanine 139 contributes to the NADPH binding site. Sn-glycerol 3-phosphate contacts are provided by lysine 190, aspartate 243, serine 253, arginine 254, and asparagine 255. Lysine 190 serves as the catalytic Proton acceptor. Arginine 254 contacts NADPH. The NADPH site is built by leucine 276 and glutamate 278.

The protein belongs to the NAD-dependent glycerol-3-phosphate dehydrogenase family.

Its subcellular location is the cytoplasm. It catalyses the reaction sn-glycerol 3-phosphate + NAD(+) = dihydroxyacetone phosphate + NADH + H(+). The enzyme catalyses sn-glycerol 3-phosphate + NADP(+) = dihydroxyacetone phosphate + NADPH + H(+). The protein operates within membrane lipid metabolism; glycerophospholipid metabolism. Its function is as follows. Catalyzes the reduction of the glycolytic intermediate dihydroxyacetone phosphate (DHAP) to sn-glycerol 3-phosphate (G3P), the key precursor for phospholipid synthesis. This chain is Glycerol-3-phosphate dehydrogenase [NAD(P)+], found in Rhodopseudomonas palustris (strain TIE-1).